The primary structure comprises 429 residues: Glucose-6-phosphate isomerase (429 aa).

The active-site Proton donor is the Glu282. Catalysis depends on residues His303 and Lys418.

Belongs to the GPI family.

Its subcellular location is the cytoplasm. The enzyme catalyses alpha-D-glucose 6-phosphate = beta-D-fructose 6-phosphate. Its pathway is carbohydrate biosynthesis; gluconeogenesis. It functions in the pathway carbohydrate degradation; glycolysis; D-glyceraldehyde 3-phosphate and glycerone phosphate from D-glucose: step 2/4. In terms of biological role, catalyzes the reversible isomerization of glucose-6-phosphate to fructose-6-phosphate. This is Glucose-6-phosphate isomerase from Mesomycoplasma hyopneumoniae (strain 7448) (Mycoplasma hyopneumoniae).